The following is an 826-amino-acid chain: Lysine-specific histone demethylase 1B (826 aa).

Over residues 1–11 (MAASRGRSKKR) the composition is skewed to basic residues. The disordered stretch occupies residues 1 to 46 (MAASRGRSKKRSNLELSPDNLPLRSSGRQAKKKAVEIPDEDEDGSS). A phosphoserine mark is found at Ser-17 and Ser-26. Cys-53, Cys-58, Cys-65, Cys-73, His-84, His-90, Cys-92, Cys-95, Cys-142, Cys-147, Cys-169, and Cys-185 together coordinate Zn(2+). The segment at 133–193 (DQQLPYWVQC…HCSFPEDLRV (61 aa)) adopts a CW-type zinc-finger fold. Ser-253 is modified (phosphoserine). The interval 279-298 (YQPNECGKALCVRPDVMELD) is GLYR1-binding. The SWIRM domain occupies 281 to 379 (PNECGKALCV…TGVLTVAAGQ (99 aa)). 389-445 (KSVLVVGAGPAGLAAARQLHNFGMKVTVLEAKDRIGGRVWDDKSFKGVVVGRGPQIV) lines the FAD pocket. Histone H3-binding stretches follow at residues 444–473 (IVNGCINNPVALMCEQLGISMRKLGERCDL), 493–504 (FNALLDVVSEWR), and 544–578 (FHLSNLEYACGSSLHQVSARSWDHNEFFAQFAGDH). The tract at residues 570–572 (FFA) is GLYR1-binding. FAD contacts are provided by residues Val-604, Glu-799, and 807–809 (QTV). The interval 802-818 (NRHFPQTVTGAYLSGVR) is GLYR1-binding.

The protein belongs to the flavin monoamine oxidase family. In terms of assembly, interacts with its cofactor GLYR1 at nucleosomes; this interaction stimulates H3K4me1 and H3K4me2 demethylation. In contrast to KDM1A, does not form a complex with RCOR1/CoREST. Possible accessory component of the polycomb repressive deubiquitinase (PR-DUB) complex, at least composed of BAP1, one of ASXL1, ASXL2 or (probably) ASXL3 and one of MBD5 or MBD6. The PR-DUB core associates with a number of accessory proteins, including FOXK1, FOXK2, KDM1B, HCFC1 and OGT; KDM1B specifically associates with ASXL2 PR-DUB complexes. Requires FAD as cofactor. Zn(2+) serves as cofactor. As to expression, expressed in growing oocytes and in intestinal gland.

The protein localises to the nucleus. The protein resides in the chromosome. The catalysed reaction is N(6),N(6)-dimethyl-L-lysyl(4)-[histone H3] + 2 A + 2 H2O = L-lysyl(4)-[histone H3] + 2 formaldehyde + 2 AH2. The enzyme catalyses N(6)-methyl-L-lysyl(4)-[histone H3] + A + H2O = L-lysyl(4)-[histone H3] + formaldehyde + AH2. Its activity is regulated as follows. Inhibited by tranylcypromine, but not by pargyline, deprenyl or rasagiline. Histone H3K4me1 and H3K4me2 demethylase activity is inhibited by DNA, this inhibition is released in complex with GLYR1. Histone demethylase that demethylates 'Lys-4' of histone H3, a specific tag for epigenetic transcriptional activation, thereby acting as a corepressor. Required for de novo DNA methylation of a subset of imprinted genes during oogenesis. Acts by oxidizing the substrate by FAD to generate the corresponding imine that is subsequently hydrolyzed. Demethylates both mono- and di-methylated 'Lys-4' of histone H3. Has no effect on tri-methylated 'Lys-4', mono-, di- or tri-methylated 'Lys-9', mono-, di- or tri-methylated 'Lys-27', mono-, di- or tri-methylated 'Lys-36' of histone H3, or on mono-, di- or tri-methylated 'Lys-20' of histone H4. Functionally, histone demethylase that demethylates 'Lys-4' of histone H3, a specific tag for epigenetic transcriptional activation, thereby acting as a corepressor. Required for de novo DNA methylation of a subset of imprinted genes during oogenesis. Acts by oxidizing the substrate by FAD to generate the corresponding imine that is subsequently hydrolyzed. Demethylates both mono- and di-methylated 'Lys-4' of histone H3. Has no effect on tri-methylated 'Lys-4', mono-, di- or tri-methylated 'Lys-9', mono-, di- or tri-methylated 'Lys-27', mono-, di- or tri-methylated 'Lys-36' of histone H3, or on mono-, di- or tri-methylated 'Lys-20' of histone H4. Alone, it is unable to demethylate H3K4me on nucleosomes and requires the presence of GLYR1 to achieve such activity, they form a multifunctional enzyme complex that modifies transcribed chromatin and facilitates Pol II transcription through nucleosomes. The polypeptide is Lysine-specific histone demethylase 1B (Mus musculus (Mouse)).